Reading from the N-terminus, the 458-residue chain is Cysteine--tRNA ligase (458 aa).

Residue cysteine 28 participates in Zn(2+) binding. Residues 30–40 (VTVYDLCHFGH) carry the 'HIGH' region motif. Zn(2+) is bound by residues cysteine 209, histidine 234, and glutamate 238. The 'KMSKS' region signature appears at 266–270 (KMSKS). Lysine 269 lines the ATP pocket.

This sequence belongs to the class-I aminoacyl-tRNA synthetase family. As to quaternary structure, monomer. Requires Zn(2+) as cofactor.

The protein resides in the cytoplasm. It catalyses the reaction tRNA(Cys) + L-cysteine + ATP = L-cysteinyl-tRNA(Cys) + AMP + diphosphate. This Mannheimia succiniciproducens (strain KCTC 0769BP / MBEL55E) protein is Cysteine--tRNA ligase.